Here is a 228-residue protein sequence, read N- to C-terminus: Cytochrome b6-f complex iron-sulfur subunit 1, chloroplastic (228 aa).

Residues 1 to 49 (MASSTLSPVTQLCSSKSGLSSVSQCLLVKPMKINSHGLGKDKRMKVKCM) constitute a chloroplast transit peptide. Residues 72 to 92 (LLGALSLPTAGMLVPYGTFFV) traverse the membrane as a helical segment. The 97-residue stretch at 115–211 (ASEWLKTHPP…ADIDDGKVVF (97 aa)) folds into the Rieske domain. Residues cysteine 157, histidine 159, cysteine 175, and histidine 178 each coordinate [2Fe-2S] cluster. A disulfide bond links cysteine 162 and cysteine 177.

Belongs to the Rieske iron-sulfur protein family. In terms of assembly, the 4 large subunits of the cytochrome b6-f complex are cytochrome b6, subunit IV (17 kDa polypeptide, petD), cytochrome f and the Rieske protein, while the 4 small subunits are petG, petL, petM and petN. The complex functions as a dimer. Requires [2Fe-2S] cluster as cofactor.

It localises to the plastid. The protein resides in the chloroplast thylakoid membrane. It carries out the reaction 2 oxidized [plastocyanin] + a plastoquinol + 2 H(+)(in) = 2 reduced [plastocyanin] + a plastoquinone + 4 H(+)(out). In terms of biological role, component of the cytochrome b6-f complex, which mediates electron transfer between photosystem II (PSII) and photosystem I (PSI), cyclic electron flow around PSI, and state transitions. The protein is Cytochrome b6-f complex iron-sulfur subunit 1, chloroplastic (petC1) of Nicotiana tabacum (Common tobacco).